A 234-amino-acid polypeptide reads, in one-letter code: MDIKLKDFEGPLDLLLHLVSQYKVDIYEVPIVEVIEQYLNYIETLQVMKLEVAGDYMLMASQLMLIKSRRLLPKVVEHIEEEDLEQDLLEKIEEYSRFKAVSQALAKQHDQRAKWYSKPKQELIFEDAILQEDKTVMDLFLAFSNIMAAKRAVLKNNHTVIERDDYKIEDMMASIKQRLEKESVISLSAIFEECQTLNEVISIFLASLELIKLHVVFVEQLSNFGAIILRKEKK.

It belongs to the ScpA family. In terms of assembly, component of a cohesin-like complex composed of ScpA, ScpB and the Smc homodimer, in which ScpA and ScpB bind to the head domain of Smc. The presence of the three proteins is required for the association of the complex with DNA.

The protein resides in the cytoplasm. In terms of biological role, participates in chromosomal partition during cell division. May act via the formation of a condensin-like complex containing Smc and ScpB that pull DNA away from mid-cell into both cell halves. The sequence is that of Segregation and condensation protein A from Streptococcus pyogenes serotype M6 (strain ATCC BAA-946 / MGAS10394).